Reading from the N-terminus, the 312-residue chain is Tetraspanin-17 (312 aa).

The next 4 helical transmembrane spans lie at 17–37 (IFSIYYWLSALGHVFLGLWML), 64–84 (VSLVCGCAQLLVGFLGLCGAV), 89–109 (FLLLAFVMFLIGTFLADVAMG), and 274–294 (IWIFVGFGFGSALTMMLGICL).

It belongs to the tetraspanin (TM4SF) family. Expressed in dopaminergic neurons, head muscles, vulva and spermatheca.

The protein localises to the cell membrane. It is found in the cell projection. It localises to the dendrite. Its subcellular location is the axon. In terms of biological role, protects dopaminergic neurons against oxidative stress-induced neurodegeneration. May act partly via dopamine receptor dop-2 to negatively regulate dopamine reuptake transporter dat-1 activity. Also plays a role in modulating behaviors linked to dopamine signaling. Confers protection against oxidative stress in the whole body. The polypeptide is Tetraspanin-17 (Caenorhabditis elegans).